A 271-amino-acid polypeptide reads, in one-letter code: Cytochrome b termination protein 1 (271 aa).

The protein resides in the mitochondrion. In terms of biological role, involved in 5'-end processing of mitochondrial COB, 15S rRNA, and RPM1 transcript. May also have a role in 3'-end processing of the COB pre-mRNA. The chain is Cytochrome b termination protein 1 (CBT1) from Saccharomyces cerevisiae (strain ATCC 204508 / S288c) (Baker's yeast).